The following is a 325-amino-acid chain: Pyruvate dehydrogenase E1 component subunit beta (325 aa).

A thiamine diphosphate-binding site is contributed by Glu-60.

As to quaternary structure, heterodimer of an alpha and a beta chain. Thiamine diphosphate serves as cofactor.

The protein localises to the cytoplasm. It is found in the secreted. It catalyses the reaction N(6)-[(R)-lipoyl]-L-lysyl-[protein] + pyruvate + H(+) = N(6)-[(R)-S(8)-acetyldihydrolipoyl]-L-lysyl-[protein] + CO2. Activity of the E1 module is inhibited by the pyruvate dehydrogenase inhibitor PdhI. The pyruvate dehydrogenase complex catalyzes the overall conversion of pyruvate to acetyl-CoA and CO(2). It contains multiple copies of three enzymatic components: pyruvate dehydrogenase (E1), dihydrolipoamide acetyltransferase (E2) and lipoamide dehydrogenase (E3). In terms of biological role, the B.subtilis PDH complex also possesses branched-chain 2-oxoacid dehydrogenase (BCDH) activity. In Bacillus subtilis (strain 168), this protein is Pyruvate dehydrogenase E1 component subunit beta.